Consider the following 365-residue polypeptide: Putative tRNA 2'-phosphotransferase (365 aa).

2 disordered regions span residues 1-35 (MYKN…IRPR) and 231-254 (LLDA…PESI). A compositionally biased stretch (low complexity) spans 17 to 27 (SGTPATKSSSK).

The protein belongs to the KptA/TPT1 family.

The catalysed reaction is 2'-phospho-[ligated tRNA] + NAD(+) = mature tRNA + ADP-alpha-D-ribose 1'',2''-cyclic phosphate + nicotinamide. In terms of biological role, catalyzes the last step of tRNA splicing, the transfer of the splice junction 2'-phosphate from ligated tRNA to NAD to produce ADP-ribose 1''-2'' cyclic phosphate. In Schizosaccharomyces pombe (strain 972 / ATCC 24843) (Fission yeast), this protein is Putative tRNA 2'-phosphotransferase.